Reading from the N-terminus, the 356-residue chain is Peptide chain release factor 1 (356 aa).

Gln234 bears the N5-methylglutamine mark.

It belongs to the prokaryotic/mitochondrial release factor family. Methylated by PrmC. Methylation increases the termination efficiency of RF1.

It is found in the cytoplasm. Functionally, peptide chain release factor 1 directs the termination of translation in response to the peptide chain termination codons UAG and UAA. This is Peptide chain release factor 1 from Exiguobacterium sp. (strain ATCC BAA-1283 / AT1b).